A 185-amino-acid polypeptide reads, in one-letter code: ATP synthase subunit b, chloroplastic (185 aa).

A helical transmembrane segment spans residues 27–49 (LATNPINLSVVLGVLIFFGKGVL).

The protein belongs to the ATPase B chain family. F-type ATPases have 2 components, F(1) - the catalytic core - and F(0) - the membrane proton channel. F(1) has five subunits: alpha(3), beta(3), gamma(1), delta(1), epsilon(1). F(0) has four main subunits: a(1), b(1), b'(1) and c(10-14). The alpha and beta chains form an alternating ring which encloses part of the gamma chain. F(1) is attached to F(0) by a central stalk formed by the gamma and epsilon chains, while a peripheral stalk is formed by the delta, b and b' chains.

The protein localises to the plastid. It localises to the chloroplast thylakoid membrane. F(1)F(0) ATP synthase produces ATP from ADP in the presence of a proton or sodium gradient. F-type ATPases consist of two structural domains, F(1) containing the extramembraneous catalytic core and F(0) containing the membrane proton channel, linked together by a central stalk and a peripheral stalk. During catalysis, ATP synthesis in the catalytic domain of F(1) is coupled via a rotary mechanism of the central stalk subunits to proton translocation. In terms of biological role, component of the F(0) channel, it forms part of the peripheral stalk, linking F(1) to F(0). The protein is ATP synthase subunit b, chloroplastic of Vitis vinifera (Grape).